A 144-amino-acid polypeptide reads, in one-letter code: Prefoldin subunit alpha (144 aa).

The protein belongs to the prefoldin alpha subunit family. In terms of assembly, heterohexamer of two alpha and four beta subunits.

It is found in the cytoplasm. Its function is as follows. Molecular chaperone capable of stabilizing a range of proteins. Seems to fulfill an ATP-independent, HSP70-like function in archaeal de novo protein folding. In Methanococcus maripaludis (strain C7 / ATCC BAA-1331), this protein is Prefoldin subunit alpha.